Here is a 312-residue protein sequence, read N- to C-terminus: Protoheme IX farnesyltransferase (312 aa).

The next 8 membrane-spanning stretches (helical) occupy residues leucine 12–leucine 32, phenylalanine 41–phenylalanine 61, valine 93–tryptophan 113, leucine 114–leucine 134, asparagine 141–threonine 161, phenylalanine 168–tryptophan 188, valine 240–isoleucine 260, and isoleucine 290–valine 310.

This sequence belongs to the UbiA prenyltransferase family. Protoheme IX farnesyltransferase subfamily.

It localises to the cell membrane. The enzyme catalyses heme b + (2E,6E)-farnesyl diphosphate + H2O = Fe(II)-heme o + diphosphate. The protein operates within porphyrin-containing compound metabolism; heme O biosynthesis; heme O from protoheme: step 1/1. Functionally, converts heme B (protoheme IX) to heme O by substitution of the vinyl group on carbon 2 of heme B porphyrin ring with a hydroxyethyl farnesyl side group. This Corynebacterium jeikeium (strain K411) protein is Protoheme IX farnesyltransferase.